Consider the following 240-residue polypeptide: 5-oxoprolinase subunit B (240 aa).

194–201 (GWQLIGKT) is an ATP binding site.

It belongs to the PxpB family. As to quaternary structure, forms a complex composed of PxpA, PxpB and PxpC. Interacts with PxpC (KipA). Interaction with PxpC prevents the inhibitory action of PxpB (KipI). Interacts with KinA. Two PxpB monomers bind via their C-domains at a conserved proline in the KinA dimerization and histidine-phosphotransfer (DHp) domain.

The catalysed reaction is 5-oxo-L-proline + ATP + 2 H2O = L-glutamate + ADP + phosphate + H(+). Catalyzes the cleavage of 5-oxoproline to form L-glutamate coupled to the hydrolysis of ATP to ADP and inorganic phosphate. In addition, is a potent inhibitor of the autophosphorylation reaction of kinase A (kinA) and its reverse reaction, but does not inhibit phosphate transfer to the Spo0F response regulator once kinase A is phosphorylated. Is an inhibitor of the catalytic domain of kinase A affecting the ATP/ADP reactions and not the phosphotransferase functions of this domain. The inhibition is non-competitive with respect to ATP. This is 5-oxoprolinase subunit B from Bacillus subtilis (strain 168).